The chain runs to 397 residues: DNA-binding protein (397 aa).

Zn(2+)-binding residues include Cys116 and His118. Residues 129–161 form a flexible loop region; sequence IEMAATSESGVAALKEGRGAVEINRWGRQVVKI. The Zn(2+) site is built by Cys169, Cys185, Cys225, Cys227, Cys276, and Cys289. The tract at residues 335–397 is C-terminal arm, DBP binding; it reads ALLPEGSVNE…IVLESSEEDE (63 aa). The tract at residues 338–397 is disordered; sequence PEGSVNEDENPFGLDNSEDEEEVVPPSPPSPARKRTRTTVAEVHHKKKKKIVLESSEEDE. Acidic residues predominate over residues 342–360; the sequence is VNEDENPFGLDNSEDEEEV.

The protein belongs to the adenoviridae E2A DNA-binding protein family. Homomultimerizes on viral ssDNA bound to pTP. Forms a initiation complex with viral polymerase, pTP and hosts NFIA and POU2F1/OCT1. Interacts with host SRCAP.

It localises to the host nucleus. Functionally, plays a role in the elongation phase of viral strand displacement replication by unwinding the template in an ATP-independent fashion, employing its capacity to form multimers. Also enhances the rate of initiation. Released from template upon second strand synthesis. Assembles in complex with viral pTP, viral pol, host NFIA and host POU2F1/OCT1 on viral origin of replication. Covers the whole ssDNA genome during synthesis. The complementary strand synthesis induces its relese from DNA template. May inhibit cellular transcription mediated by the interaction between host SRCAP and CBP. The protein is DNA-binding protein of Snake adenovirus serotype 1 (SnAdV-1).